A 185-amino-acid polypeptide reads, in one-letter code: MIDDILLEAEDKMDKAVEVARDELGAIRTGRANAALFQKILVDYYGAPTPLQQLAGITIPEARVILINPYDRGAASEIEKALRASDLGVNPSDDGNVIRIVLPQLTEERRREYVKLAKGKGEDARVSVRAVRRKAKDELDRIVRDGEAGEDEVARAEKELELATKSHVDAIDDLLSHKERELLEV.

This sequence belongs to the RRF family.

It localises to the cytoplasm. Functionally, responsible for the release of ribosomes from messenger RNA at the termination of protein biosynthesis. May increase the efficiency of translation by recycling ribosomes from one round of translation to another. This is Ribosome-recycling factor from Beutenbergia cavernae (strain ATCC BAA-8 / DSM 12333 / CCUG 43141 / JCM 11478 / NBRC 16432 / NCIMB 13614 / HKI 0122).